The following is a 93-amino-acid chain: DNA-directed RNA polymerase subunit omega (93 aa).

This sequence belongs to the RNA polymerase subunit omega family. The RNAP catalytic core consists of 2 alpha, 1 beta, 1 beta' and 1 omega subunit. When a sigma factor is associated with the core the holoenzyme is formed, which can initiate transcription.

The enzyme catalyses RNA(n) + a ribonucleoside 5'-triphosphate = RNA(n+1) + diphosphate. Promotes RNA polymerase assembly. Latches the N- and C-terminal regions of the beta' subunit thereby facilitating its interaction with the beta and alpha subunits. The sequence is that of DNA-directed RNA polymerase subunit omega from Actinobacillus pleuropneumoniae serotype 7 (strain AP76).